Here is a 31-residue protein sequence, read N- to C-terminus: Cyclotide cter-C (31 aa).

A cross-link (cyclopeptide (Gly-Asp)) is located at residues 1–31 (GVPCAESCVWIPCTVTALLGCSCKDKVCYLD). 3 cysteine pairs are disulfide-bonded: Cys-4–Cys-21, Cys-8–Cys-23, and Cys-13–Cys-28.

Post-translationally, contains 3 disulfide bonds. In terms of processing, this is a cyclic peptide.

Its function is as follows. Probably participates in a plant defense mechanism. The polypeptide is Cyclotide cter-C (Clitoria ternatea (Butterfly pea)).